We begin with the raw amino-acid sequence, 798 residues long: MEIRGALDLRKRQVLIFLVLLGLSRAGTESAHYSVAEETEIGSFVANLARDLGLGVEELSSREARVVSDDNKKYLHLDLLTGNLLLNEKLDRDELCGSTEPCVLHFQVVLENPLQFFRFELCVKDINDHSPTFLDKEILIKISEGTTVGATFLMESAQDLDVGSNSLQNYTISPNSHFYIKIPDSSDRKIYPELVLDRALDYEQEAELRLTLTAVDGGSPPKSGTTLVLIKVLDINDNAPEFPQSLYEVQVPEDRPLGSWIATISAKDLDAGNYGKISYTFFHASEDIRKTFEINPISGEVNLRSPLDFEVIQSYTINIQATDGGGLSGKCTLLVKVMDINDNPPEVTISSITKRIPENASETLVALFSILDQDSGDNGRMICSIQDNLPFFLKPTFKNFFTLVSEKALDRESQAEYNITITVTDLGTPRLKTEYNITVLLSDVNDNAPTFTQTSYTLFVRENNSPALHIGSVSATDRDSGTNAQVNYSLLPPQDRHLPLASLVSINADNGHLFALRSLDYEALQEFEFRVGATDRGSPALSSEALVRVLVLDANDNSPFVLYPLQNGSAPCTELVPRAAEPGYLVTKVVAVDGDSGQNAWLSYQLLKATEPGLFGVWAHNGEVRTARLLSERDAAKHRLVVLVKDNGEPPRSATATLHVLLVDGFSQPYLPLPEAAPAQAQADSLTVYLVVALASVSSLFLFSVLLFVAVRLCRRSRAASVGRCSVPEGPFPGHLVDVSGTGTLSQSYQYEVCLTGGSGTNEFKFLKPIIPNFQVHDTGRNMGEIENFRNSFGLNIQ.

The signal sequence occupies residues 1-26; it reads MEIRGALDLRKRQVLIFLVLLGLSRA. Topologically, residues 27-686 are extracellular; it reads GTESAHYSVA…APAQAQADSL (660 aa). Cadherin domains follow at residues 35–133, 138–242, 247–347, 352–451, and 456–561; these read VAEE…SPTF, ILIK…APEF, YEVQ…PPEV, ITKR…APTF, and YTLF…SPFV. The cysteines at positions 96 and 102 are disulfide-linked. An N-linked (GlcNAc...) asparagine glycan is attached at Asn-169. 5 N-linked (GlcNAc...) asparagine glycosylation sites follow: Asn-359, Asn-418, Asn-436, Asn-487, and Asn-567. The Cadherin 6 domain occupies 568 to 671; the sequence is GSAPCTELVP…LVDGFSQPYL (104 aa). A helical transmembrane segment spans residues 687 to 711; it reads TVYLVVALASVSSLFLFSVLLFVAV. The Cytoplasmic portion of the chain corresponds to 712–798; sequence RLCRRSRAAS…FRNSFGLNIQ (87 aa).

Its subcellular location is the cell membrane. Potential calcium-dependent cell-adhesion protein. May be involved in the establishment and maintenance of specific neuronal connections in the brain. This Homo sapiens (Human) protein is Protocadherin beta-14 (PCDHB14).